Consider the following 529-residue polypeptide: Listeriolysin O (529 aa).

An N-terminal signal peptide occupies residues 1–24; sequence MKKIMLVFITLILVSLPIAQQTEA. A disordered region spans residues 35 to 54; it reads SISSMAPPASPPASPKTPIE. 4 beta stranded membrane-spanning segments follow: residues 214 to 227, 234 to 243, 312 to 321, and 329 to 341; these read ESQL…AFKA, VNFGAISEGK, STKVKAAFDA, and SGDV…IKNS. A Conserved undecapeptide motif is present at residues 483-493; that stretch reads ECTGLAWEWWR. The Cholesterol binding signature appears at 515–516; it reads TL.

The protein belongs to the cholesterol-dependent cytolysin family. Homooligomeric pore complex of 35 to 50 subunits; when inserted in the host membrane.

Its subcellular location is the secreted. It is found in the host membrane. The protein localises to the host cell membrane. Activity of listeriolysin O is regulated on multiple levels. It should be high in the phagosome, thereby allowing escape of the bacteria from the phagosomal compartment. Then, once inside the host cytosol, the activity must be controlled to prevent lysis of the host plasma membrane and loss of the intracellular environment. A cholesterol-dependent toxin that causes cytolysis by forming pores in cholesterol containing host membranes. After binding to target membranes, the protein undergoes a major conformation change, leading to its insertion in the host membrane and formation of an oligomeric pore complex. Cholesterol is required for binding to host membranes, membrane insertion and pore formation; cholesterol binding is mediated by a Thr-Leu pair in the C-terminus. Acts as a major virulence factor required for the escape of bacteria from phagosomal vacuoles and entry into the host cytosol. Can be reversibly inactivated by oxidation. The chain is Listeriolysin O (hly) from Listeria monocytogenes serotype 1/2a (strain 08-5578).